Reading from the N-terminus, the 128-residue chain is DNA-directed RNA polymerase subunit omega (128 aa).

It belongs to the RNA polymerase subunit omega family. As to quaternary structure, the RNAP catalytic core consists of 2 alpha, 1 beta, 1 beta' and 1 omega subunit. When a sigma factor is associated with the core the holoenzyme is formed, which can initiate transcription.

The catalysed reaction is RNA(n) + a ribonucleoside 5'-triphosphate = RNA(n+1) + diphosphate. In terms of biological role, promotes RNA polymerase assembly. Latches the N- and C-terminal regions of the beta' subunit thereby facilitating its interaction with the beta and alpha subunits. The chain is DNA-directed RNA polymerase subunit omega from Neorickettsia sennetsu (strain ATCC VR-367 / Miyayama) (Ehrlichia sennetsu).